A 332-amino-acid polypeptide reads, in one-letter code: UDP-N-acetylenolpyruvoylglucosamine reductase (332 aa).

Residues 15 to 184 (IDVSAACFLE…TYVSFRLSKR (170 aa)) form the FAD-binding PCMH-type domain. Arg160 is a catalytic residue. Ser232 serves as the catalytic Proton donor. The active site involves Glu328.

This sequence belongs to the MurB family. FAD is required as a cofactor.

Its subcellular location is the cytoplasm. The enzyme catalyses UDP-N-acetyl-alpha-D-muramate + NADP(+) = UDP-N-acetyl-3-O-(1-carboxyvinyl)-alpha-D-glucosamine + NADPH + H(+). It participates in cell wall biogenesis; peptidoglycan biosynthesis. Functionally, cell wall formation. This Bacteroides fragilis (strain ATCC 25285 / DSM 2151 / CCUG 4856 / JCM 11019 / LMG 10263 / NCTC 9343 / Onslow / VPI 2553 / EN-2) protein is UDP-N-acetylenolpyruvoylglucosamine reductase.